We begin with the raw amino-acid sequence, 552 residues long: Urocanate hydratase (552 aa).

NAD(+) is bound by residues G49–G50, Q127, G173–G175, D193, N239–A240, Q260–H264, Y270–I271, and Y319. C407 is a catalytic residue. NAD(+) is bound at residue G489.

It belongs to the urocanase family. The cofactor is NAD(+).

It is found in the cytoplasm. It catalyses the reaction 4-imidazolone-5-propanoate = trans-urocanate + H2O. The protein operates within amino-acid degradation; L-histidine degradation into L-glutamate; N-formimidoyl-L-glutamate from L-histidine: step 2/3. Catalyzes the conversion of urocanate to 4-imidazolone-5-propionate. This chain is Urocanate hydratase, found in Bacillus cereus (strain AH820).